We begin with the raw amino-acid sequence, 118 residues long: Protein yippee-like 1 (118 aa).

The Yippee domain occupies R19–N116. Residues C23, C26, C79, and C82 each contribute to the Zn(2+) site. The Nuclear localization signal motif lies at K99–K104.

It belongs to the yippee family.

The protein localises to the nucleus. May play a role in epithelioid conversion of fibroblasts. The sequence is that of Protein yippee-like 1 (Ypel1) from Mus musculus (Mouse).